The chain runs to 231 residues: Biosynthetic peptidoglycan transglycosylase (231 aa).

A helical membrane pass occupies residues 7 to 27 (LLFWLILVPILLVLLMQLYFF).

This sequence belongs to the glycosyltransferase 51 family.

The protein resides in the cell inner membrane. It carries out the reaction [GlcNAc-(1-&gt;4)-Mur2Ac(oyl-L-Ala-gamma-D-Glu-L-Lys-D-Ala-D-Ala)](n)-di-trans,octa-cis-undecaprenyl diphosphate + beta-D-GlcNAc-(1-&gt;4)-Mur2Ac(oyl-L-Ala-gamma-D-Glu-L-Lys-D-Ala-D-Ala)-di-trans,octa-cis-undecaprenyl diphosphate = [GlcNAc-(1-&gt;4)-Mur2Ac(oyl-L-Ala-gamma-D-Glu-L-Lys-D-Ala-D-Ala)](n+1)-di-trans,octa-cis-undecaprenyl diphosphate + di-trans,octa-cis-undecaprenyl diphosphate + H(+). It functions in the pathway cell wall biogenesis; peptidoglycan biosynthesis. Functionally, peptidoglycan polymerase that catalyzes glycan chain elongation from lipid-linked precursors. This is Biosynthetic peptidoglycan transglycosylase from Herminiimonas arsenicoxydans.